The following is a 95-amino-acid chain: Large ribosomal subunit protein bL25 (95 aa).

The protein belongs to the bacterial ribosomal protein bL25 family. Part of the 50S ribosomal subunit; part of the 5S rRNA/L5/L18/L25 subcomplex. Contacts the 5S rRNA. Binds to the 5S rRNA independently of L5 and L18.

Its function is as follows. This is one of the proteins that binds to the 5S RNA in the ribosome where it forms part of the central protuberance. In Shewanella frigidimarina (strain NCIMB 400), this protein is Large ribosomal subunit protein bL25.